Consider the following 368-residue polypeptide: tRNA-specific 2-thiouridylase MnmA (368 aa).

ATP is bound by residues 12–19 and Met-38; that span reads GMSGGVDS. Residues 98 to 100 are interaction with target base in tRNA; the sequence is NPD. The Nucleophile role is filled by Cys-103. Cys-103 and Cys-200 are joined by a disulfide. Gly-128 lines the ATP pocket. The interaction with tRNA stretch occupies residues 150-152; sequence KDQ. Cys-200 functions as the Cysteine persulfide intermediate in the catalytic mechanism. The segment at 313 to 314 is interaction with tRNA; that stretch reads RY.

Belongs to the MnmA/TRMU family. Interacts with TusE.

The protein resides in the cytoplasm. It catalyses the reaction S-sulfanyl-L-cysteinyl-[protein] + uridine(34) in tRNA + AH2 + ATP = 2-thiouridine(34) in tRNA + L-cysteinyl-[protein] + A + AMP + diphosphate + H(+). In terms of biological role, catalyzes the 2-thiolation of uridine at the wobble position (U34) of tRNA(Lys), tRNA(Glu) and tRNA(Gln), leading to the formation of s(2)U34, the first step of tRNA-mnm(5)s(2)U34 synthesis. Sulfur is provided by IscS, via a sulfur-relay system. Binds ATP and its substrate tRNAs. This is tRNA-specific 2-thiouridylase MnmA from Pectobacterium atrosepticum (strain SCRI 1043 / ATCC BAA-672) (Erwinia carotovora subsp. atroseptica).